Reading from the N-terminus, the 348-residue chain is Phenylalanine--tRNA ligase alpha subunit (348 aa).

Position 259 (Glu-259) interacts with Mg(2+).

It belongs to the class-II aminoacyl-tRNA synthetase family. Phe-tRNA synthetase alpha subunit type 1 subfamily. As to quaternary structure, tetramer of two alpha and two beta subunits. Mg(2+) is required as a cofactor.

Its subcellular location is the cytoplasm. The catalysed reaction is tRNA(Phe) + L-phenylalanine + ATP = L-phenylalanyl-tRNA(Phe) + AMP + diphosphate + H(+). The polypeptide is Phenylalanine--tRNA ligase alpha subunit (Levilactobacillus brevis (strain ATCC 367 / BCRC 12310 / CIP 105137 / JCM 1170 / LMG 11437 / NCIMB 947 / NCTC 947) (Lactobacillus brevis)).